Consider the following 340-residue polypeptide: Glyceraldehyde-3-phosphate dehydrogenase (340 aa).

NAD(+) is bound by residues 11–12 and Gly109; that span reads TI. 138 to 140 lines the D-glyceraldehyde 3-phosphate pocket; it reads SCN. The active-site Nucleophile is Cys139. An NAD(+)-binding site is contributed by Arg167. 193 to 194 is a D-glyceraldehyde 3-phosphate binding site; it reads HA. Gln300 is an NAD(+) binding site.

The protein belongs to the glyceraldehyde-3-phosphate dehydrogenase family. In terms of assembly, homotetramer.

It is found in the cytoplasm. It catalyses the reaction D-glyceraldehyde 3-phosphate + phosphate + NADP(+) = (2R)-3-phospho-glyceroyl phosphate + NADPH + H(+). It carries out the reaction D-glyceraldehyde 3-phosphate + phosphate + NAD(+) = (2R)-3-phospho-glyceroyl phosphate + NADH + H(+). The protein operates within carbohydrate degradation; glycolysis; pyruvate from D-glyceraldehyde 3-phosphate: step 1/5. The polypeptide is Glyceraldehyde-3-phosphate dehydrogenase (Metallosphaera sedula (strain ATCC 51363 / DSM 5348 / JCM 9185 / NBRC 15509 / TH2)).